A 169-amino-acid chain; its full sequence is Alpha-S2-casein-like B (169 aa).

Positions Met1–Ala15 are cleaved as a signal peptide.

Belongs to the alpha-casein family. As to expression, mammary gland specific. Secreted in milk.

It is found in the secreted. Its function is as follows. Important role in the capacity of milk to transport calcium phosphate. This Rattus norvegicus (Rat) protein is Alpha-S2-casein-like B (Csn1s2b).